A 425-amino-acid chain; its full sequence is Serine--tRNA ligase (425 aa).

L-serine is bound at residue 235–237 (TAE). 266–268 (RSE) is an ATP binding site. Residue Glu289 participates in L-serine binding. 353-356 (EISS) contributes to the ATP binding site. Ser389 serves as a coordination point for L-serine.

This sequence belongs to the class-II aminoacyl-tRNA synthetase family. Type-1 seryl-tRNA synthetase subfamily. Homodimer. The tRNA molecule binds across the dimer.

Its subcellular location is the cytoplasm. The catalysed reaction is tRNA(Ser) + L-serine + ATP = L-seryl-tRNA(Ser) + AMP + diphosphate + H(+). The enzyme catalyses tRNA(Sec) + L-serine + ATP = L-seryl-tRNA(Sec) + AMP + diphosphate + H(+). The protein operates within aminoacyl-tRNA biosynthesis; selenocysteinyl-tRNA(Sec) biosynthesis; L-seryl-tRNA(Sec) from L-serine and tRNA(Sec): step 1/1. Its function is as follows. Catalyzes the attachment of serine to tRNA(Ser). Is also able to aminoacylate tRNA(Sec) with serine, to form the misacylated tRNA L-seryl-tRNA(Sec), which will be further converted into selenocysteinyl-tRNA(Sec). This is Serine--tRNA ligase from Desulfotalea psychrophila (strain LSv54 / DSM 12343).